We begin with the raw amino-acid sequence, 182 residues long: UPF0397 protein BCE_2667 (182 aa).

Helical transmembrane passes span 9–29, 40–60, 71–91, 114–134, and 142–162; these read VVAIGIGAALYGILGLWGFSI, AILTIFGALFGPVAGLLIGLI, WGIWWGWVFSSGIIGFAMGLI, ITGLIGIVIAIIFAGAFDIIV, and IVIQVLGATIADVIVFLVLGL.

It belongs to the UPF0397 family.

The protein localises to the cell membrane. This chain is UPF0397 protein BCE_2667, found in Bacillus cereus (strain ATCC 10987 / NRS 248).